Consider the following 204-residue polypeptide: Ribonuclease HII (204 aa).

Residues Gln14–Lys204 enclose the RNase H type-2 domain. Positions 20, 21, and 116 each coordinate a divalent metal cation.

Belongs to the RNase HII family. The cofactor is Mn(2+). Mg(2+) is required as a cofactor.

The protein resides in the cytoplasm. It catalyses the reaction Endonucleolytic cleavage to 5'-phosphomonoester.. Its function is as follows. Endonuclease that specifically degrades the RNA of RNA-DNA hybrids. This Chloroherpeton thalassium (strain ATCC 35110 / GB-78) protein is Ribonuclease HII.